Reading from the N-terminus, the 237-residue chain is tRNA1(Val) (adenine(37)-N6)-methyltransferase (237 aa).

The protein belongs to the methyltransferase superfamily. tRNA (adenine-N(6)-)-methyltransferase family.

The protein resides in the cytoplasm. It catalyses the reaction adenosine(37) in tRNA1(Val) + S-adenosyl-L-methionine = N(6)-methyladenosine(37) in tRNA1(Val) + S-adenosyl-L-homocysteine + H(+). Functionally, specifically methylates the adenine in position 37 of tRNA(1)(Val) (anticodon cmo5UAC). This is tRNA1(Val) (adenine(37)-N6)-methyltransferase from Tolumonas auensis (strain DSM 9187 / NBRC 110442 / TA 4).